The following is a 373-amino-acid chain: 4-hydroxy-3-methylbut-2-en-1-yl diphosphate synthase (flavodoxin) (373 aa).

[4Fe-4S] cluster-binding residues include C270, C273, C305, and E312.

The protein belongs to the IspG family. Requires [4Fe-4S] cluster as cofactor.

The enzyme catalyses (2E)-4-hydroxy-3-methylbut-2-enyl diphosphate + oxidized [flavodoxin] + H2O + 2 H(+) = 2-C-methyl-D-erythritol 2,4-cyclic diphosphate + reduced [flavodoxin]. Its pathway is isoprenoid biosynthesis; isopentenyl diphosphate biosynthesis via DXP pathway; isopentenyl diphosphate from 1-deoxy-D-xylulose 5-phosphate: step 5/6. In terms of biological role, converts 2C-methyl-D-erythritol 2,4-cyclodiphosphate (ME-2,4cPP) into 1-hydroxy-2-methyl-2-(E)-butenyl 4-diphosphate. This chain is 4-hydroxy-3-methylbut-2-en-1-yl diphosphate synthase (flavodoxin), found in Erwinia tasmaniensis (strain DSM 17950 / CFBP 7177 / CIP 109463 / NCPPB 4357 / Et1/99).